A 484-amino-acid polypeptide reads, in one-letter code: Protein nucleotidyltransferase YdiU (484 aa).

Residues G81, G83, R84, K103, D115, G116, R166, and R173 each contribute to the ATP site. The Proton acceptor role is filled by D244. Residues N245 and D254 each coordinate Mg(2+). Position 254 (D254) interacts with ATP.

This sequence belongs to the SELO family. Mg(2+) serves as cofactor. Mn(2+) is required as a cofactor.

It carries out the reaction L-seryl-[protein] + ATP = 3-O-(5'-adenylyl)-L-seryl-[protein] + diphosphate. The catalysed reaction is L-threonyl-[protein] + ATP = 3-O-(5'-adenylyl)-L-threonyl-[protein] + diphosphate. The enzyme catalyses L-tyrosyl-[protein] + ATP = O-(5'-adenylyl)-L-tyrosyl-[protein] + diphosphate. It catalyses the reaction L-histidyl-[protein] + UTP = N(tele)-(5'-uridylyl)-L-histidyl-[protein] + diphosphate. It carries out the reaction L-seryl-[protein] + UTP = O-(5'-uridylyl)-L-seryl-[protein] + diphosphate. The catalysed reaction is L-tyrosyl-[protein] + UTP = O-(5'-uridylyl)-L-tyrosyl-[protein] + diphosphate. Nucleotidyltransferase involved in the post-translational modification of proteins. It can catalyze the addition of adenosine monophosphate (AMP) or uridine monophosphate (UMP) to a protein, resulting in modifications known as AMPylation and UMPylation. The chain is Protein nucleotidyltransferase YdiU from Shewanella sp. (strain MR-7).